The following is a 258-amino-acid chain: Peptidase inhibitor 15 (258 aa).

The N-terminal stretch at 1–19 (MIAISAVSSALLFSLLCEA) is a signal peptide. A propeptide spanning residues 20 to 60 (STVVLLNSTDSSPPTNNFTDIEAALKAQLDSADIPKARRKR) is cleaved from the precursor. Residues Asn26, Asn36, and Asn124 are each glycosylated (N-linked (GlcNAc...) asparagine). One can recognise an SCP domain in the interval 71–211 (LDYHNQVRGK…RRAVYLVCNY (141 aa)).

Belongs to the CRISP family. In terms of processing, N-glycosylated. As to expression, weakly expressed. Expressed at low level in prostate, mammary gland, salivary gland and thyroid gland.

It localises to the secreted. Functionally, serine protease inhibitor which displays weak inhibitory activity against trypsin. May play a role in facial patterning during embryonic development. In Homo sapiens (Human), this protein is Peptidase inhibitor 15 (PI15).